Consider the following 295-residue polypeptide: Ethanolamine ammonia-lyase small subunit (295 aa).

3 residues coordinate adenosylcob(III)alamin: Val-207, Glu-228, and Cys-258.

This sequence belongs to the EutC family. In terms of assembly, the basic unit is a heterodimer which dimerizes to form tetramers. The heterotetramers trimerize; 6 large subunits form a core ring with 6 small subunits projecting outwards. Adenosylcob(III)alamin is required as a cofactor.

The protein resides in the bacterial microcompartment. It carries out the reaction ethanolamine = acetaldehyde + NH4(+). It participates in amine and polyamine degradation; ethanolamine degradation. Its function is as follows. Catalyzes the deamination of various vicinal amino-alcohols to oxo compounds. Allows this organism to utilize ethanolamine as the sole source of nitrogen and carbon in the presence of external vitamin B12. This chain is Ethanolamine ammonia-lyase small subunit, found in Escherichia coli O81 (strain ED1a).